We begin with the raw amino-acid sequence, 397 residues long: Yellow-related salivary protein LJM111 (397 aa).

A signal peptide spans 1–18; the sequence is MKLFFFLYTFGLVQTIFG.

It belongs to the major royal jelly protein family. Salivary gland (at protein level).

Its subcellular location is the secreted. Its function is as follows. Probably modulates blood feeding of sand flies on vertebrate species by binding and sequestering different mediators involved in the host response. Binds biogenic amines. Binds adrenaline and noradrenaline with high affinity. Binds serotonin. Binds dopamine and octopamine. Exhibits anti-inflammatory effects in the host: reduces IL17A, TNF-alpha (TNF) and IFN-gamma (IFNG) production by host lymph node cells, suppresses expression of MHC-II and CD86, reduces TNF-alpha production and increases IL10 production, in host bone marrow-derived dendritic cells (BMDCs) stimulated by lipopolysaccharides. Reduces pain in mouse mechanical hypernociception model. In Lutzomyia longipalpis (Sand fly), this protein is Yellow-related salivary protein LJM111.